We begin with the raw amino-acid sequence, 243 residues long: Probable transcriptional regulatory protein LSEI_1022 (243 aa).

Residues 1 to 23 form a disordered region; sequence MSGHSKWHNIQGRKNAQDSKRGK.

The protein belongs to the TACO1 family.

Its subcellular location is the cytoplasm. The chain is Probable transcriptional regulatory protein LSEI_1022 from Lacticaseibacillus paracasei (strain ATCC 334 / BCRC 17002 / CCUG 31169 / CIP 107868 / KCTC 3260 / NRRL B-441) (Lactobacillus paracasei).